The sequence spans 1029 residues: FYVE, RhoGEF and PH domain-containing protein tag-77 (1029 aa).

Basic and acidic residues-rich tracts occupy residues 1–12 (MKYDMNHRKNSD) and 20–39 (TVKE…DNRF). Disordered regions lie at residues 1–155 (MKYD…ATSE), 185–254 (VPRM…ERKT), and 279–370 (NNGV…EKDD). The segment covering 42 to 56 (QPPPPPSPRRAPPPP) has biased composition (pro residues). Composition is skewed to low complexity over residues 76–85 (PPSSSESSEN) and 122–133 (SSSTSDVSSQNS). Polar residues-rich tracts occupy residues 141–155 (SCTT…ATSE) and 200–211 (PISQVSTLSQVS). The span at 212–227 (DEFDEGDTSASDEESM) shows a compositional bias: acidic residues. The segment covering 316-334 (SPTSGMSSSSTDDFSRITS) has biased composition (low complexity). The span at 335–347 (MTSDRSSILTSHS) shows a compositional bias: polar residues. Positions 375–572 (KLHYAAVEFL…ENVTQAVNQK (198 aa)) constitute a DH domain. The 104-residue stretch at 593–696 (NVLEPGRVLI…WTDDLTKAQY (104 aa)) folds into the PH domain. Zn(2+) contacts are provided by Cys-810, Cys-823, Cys-826, Cys-831, Cys-834, Cys-851, and Cys-854. Residues 810–859 (CSTEFNIINRRHHCRDCGWLICKFCKGQAPLSKYDFTKQNVCSECFDRHY) form an FYVE-type; degenerate zinc finger.

Its subcellular location is the cytoplasm. The protein resides in the cytoskeleton. Activates cdc-42, a member of the Ras-like family of Rho- and Rac proteins, by exchanging bound GDP for free GTP. May play a role in regulating the actin cytoskeleton and cell shape. Required for normal lifespan. This chain is FYVE, RhoGEF and PH domain-containing protein tag-77, found in Caenorhabditis elegans.